The primary structure comprises 229 residues: Ribonuclease 3 (229 aa).

In terms of domain architecture, RNase III spans leucine 5–aspartate 127. A Mg(2+)-binding site is contributed by glutamate 40. Aspartate 44 is a catalytic residue. Residues aspartate 113 and glutamate 116 each coordinate Mg(2+). The active site involves glutamate 116. One can recognise a DRBM domain in the interval aspartate 154–valine 224.

It belongs to the ribonuclease III family. Homodimer. The cofactor is Mg(2+).

The protein localises to the cytoplasm. It carries out the reaction Endonucleolytic cleavage to 5'-phosphomonoester.. Its function is as follows. Digests double-stranded RNA. Involved in the processing of primary rRNA transcript to yield the immediate precursors to the large and small rRNAs (23S and 16S). Processes some mRNAs, and tRNAs when they are encoded in the rRNA operon. Processes pre-crRNA and tracrRNA of type II CRISPR loci if present in the organism. The chain is Ribonuclease 3 from Pseudomonas entomophila (strain L48).